Consider the following 499-residue polypeptide: Lysine--tRNA ligase (499 aa).

Residues Glu-408 and Glu-415 each contribute to the Mg(2+) site.

Belongs to the class-II aminoacyl-tRNA synthetase family. Homodimer. Mg(2+) serves as cofactor.

The protein localises to the cytoplasm. It catalyses the reaction tRNA(Lys) + L-lysine + ATP = L-lysyl-tRNA(Lys) + AMP + diphosphate. The protein is Lysine--tRNA ligase of Bacillus thuringiensis (strain Al Hakam).